The primary structure comprises 196 residues: Large ribosomal subunit protein uL6 (196 aa).

Belongs to the universal ribosomal protein uL6 family. As to quaternary structure, part of the 50S ribosomal subunit.

Its function is as follows. This protein binds to the 23S rRNA, and is important in its secondary structure. It is located near the subunit interface in the base of the L7/L12 stalk, and near the tRNA binding site of the peptidyltransferase center. In Archaeoglobus fulgidus (strain ATCC 49558 / DSM 4304 / JCM 9628 / NBRC 100126 / VC-16), this protein is Large ribosomal subunit protein uL6.